A 350-amino-acid chain; its full sequence is MQKNIYVLYGGPSTEHEVSITSARTLINNLSKEKYNVNAIFVRRNKKFIMKENITEEIKSDEELILDTDLSVIESVSECIRKINPENTVIFPAIHGSYGEDGTIQGFIKVLDLPFVGCNVLGSALCMDKGYTNDIFELNKIPQAKYVVLCKNDDYNLKEIFEKTSKAVYVKPCNAGSSVGVMRAETEEELEKAIQNAFQYDRRILVEEEIIGPELQIAVMGNDNPVASRPGVYQIHDVEFFDYDAKYNDSKTEMLTPFPMDEKLELKARHLAEKVYKLMSLSGFSRVDMFVKDNELWVNEINTVPGLTPHSMFPVLWKCTNDMSVSEVFDNLIGLAVEEYKKNKAYKLER.

Residues 133-334 (NDIFELNKIP…VSEVFDNLIG (202 aa)) enclose the ATP-grasp domain. 161 to 216 (FEKTSKAVYVKPCNAGSSVGVMRAETEEELEKAIQNAFQYDRRILVEEEIIGPELQ) contacts ATP. Mg(2+) is bound by residues D288, E300, and N302.

Belongs to the D-alanine--D-alanine ligase family. It depends on Mg(2+) as a cofactor. The cofactor is Mn(2+).

It localises to the cytoplasm. It carries out the reaction 2 D-alanine + ATP = D-alanyl-D-alanine + ADP + phosphate + H(+). It functions in the pathway cell wall biogenesis; peptidoglycan biosynthesis. In terms of biological role, cell wall formation. In Finegoldia magna (strain ATCC 29328 / DSM 20472 / WAL 2508) (Peptostreptococcus magnus), this protein is D-alanine--D-alanine ligase.